The chain runs to 275 residues: Large ribosomal subunit protein uL2 (275 aa).

The disordered stretch occupies residues 223 to 260; that stretch reads VAMNPVDHPHGGGEGRTSGGRHPVSPWGLPTKGYKTRS.

This sequence belongs to the universal ribosomal protein uL2 family. In terms of assembly, part of the 50S ribosomal subunit. Forms a bridge to the 30S subunit in the 70S ribosome.

Functionally, one of the primary rRNA binding proteins. Required for association of the 30S and 50S subunits to form the 70S ribosome, for tRNA binding and peptide bond formation. It has been suggested to have peptidyltransferase activity; this is somewhat controversial. Makes several contacts with the 16S rRNA in the 70S ribosome. The sequence is that of Large ribosomal subunit protein uL2 from Legionella pneumophila (strain Lens).